Reading from the N-terminus, the 326-residue chain is WRKY transcription factor 8 (326 aa).

Residues 115–172 (VRVSASPSSSEADHHPGEDSGKIRKKREVRDGGEDDQRSQKVVKTKKKEEKKKEPRVS) form a disordered region. Composition is skewed to basic and acidic residues over residues 125–153 (EADHHPGEDSGKIRKKREVRDGGEDDQRS) and 161–170 (KKEEKKKEPR). A DNA-binding region (WRKY) is located at residues 177–242 (TEVDHLEDGY…YESQHNHPIP (66 aa)).

The protein belongs to the WRKY group II-c family. As to quaternary structure, interacts with VQ9 (via N-terminus). Highly expressed in roots and at lower levels in rosette leaves, cauline leaves, stems, flowers and siliques.

It localises to the nucleus. Functionally, transcription factor. Interacts specifically with the W box (5'-TTGAC[CT]-3'), a frequently occurring stress-responsive cis-acting element. Functions as a positive regulator of salt stress response. Binds the W box of LTI78/RD29A stress-response gene and directly regulates its transcription under salt stress. Functions antagonistically with VQ9 to regulate sodium and potassium homeostasis under salt stress by regulating the expression of downstream SOS (SALT OVERLY SENSITIVE) stress-responsive genes. The DNA-binding activity of WRKY8 is decreased by VQ9. Functions as a negative regulator of basal resistance to the bacterial pathogen P.syringae and as positive regulator of resistance to the fungal pathogen to B.cinerea. Functions as a positive regulator of defense response againt tobamovirus (TMV) by regulating both the abscisic acid and ethylene signaling pathways. Positively regulates ABI4 expression and negatively modulates ACS6 and ERF104 expression by directly binding to the W box consensus motifs within their promoters. The chain is WRKY transcription factor 8 (WRKY8) from Arabidopsis thaliana (Mouse-ear cress).